The primary structure comprises 205 residues: Ribonuclease HII (205 aa).

The 205-residue stretch at 1-205 folds into the RNase H type-2 domain; that stretch reads MLVCGVDEAG…RPARLIEAGG (205 aa). 3 residues coordinate a divalent metal cation: aspartate 7, glutamate 8, and aspartate 105.

This sequence belongs to the RNase HII family. Requires Mn(2+) as cofactor. The cofactor is Mg(2+).

It localises to the cytoplasm. The catalysed reaction is Endonucleolytic cleavage to 5'-phosphomonoester.. Endonuclease that specifically degrades the RNA of RNA-DNA hybrids. This chain is Ribonuclease HII, found in Cenarchaeum symbiosum (strain A).